Reading from the N-terminus, the 332-residue chain is Fructose-1,6-bisphosphatase class 1 (332 aa).

Residues glutamate 89, aspartate 110, leucine 112, and aspartate 113 each contribute to the Mg(2+) site. Residues 113-116 (DGSS), asparagine 206, tyrosine 239, 257-259 (YLY), and lysine 269 each bind substrate. Residue glutamate 275 coordinates Mg(2+).

This sequence belongs to the FBPase class 1 family. Homotetramer. Mg(2+) serves as cofactor.

The protein localises to the cytoplasm. The enzyme catalyses beta-D-fructose 1,6-bisphosphate + H2O = beta-D-fructose 6-phosphate + phosphate. It functions in the pathway carbohydrate biosynthesis; gluconeogenesis. The chain is Fructose-1,6-bisphosphatase class 1 from Escherichia coli O157:H7.